Here is a 1161-residue protein sequence, read N- to C-terminus: Translation initiation factor IF-2 (1161 aa).

Residues 67–561 are disordered; that stretch reads KSSFKAANEQ…RRAMELRAAK (495 aa). Residues 83 to 105 show a composition bias toward basic and acidic residues; it reads QNKDSNSRSKPLNKEKPSKESLN. Residues 139–154 show a composition bias toward polar residues; sequence SRISNLQSQVLPNSHN. Basic and acidic residues-rich tracts occupy residues 164–180 and 211–220; these read NPNE…EKKS and KDIKANKKND. 2 stretches are compositionally biased toward low complexity: residues 224–250 and 268–282; these read NQRP…PRIK and NSNR…PPSN. Polar residues-rich tracts occupy residues 295–311, 352–362, and 380–393; these read RQVT…QGVS, RQGAPNRQGSP, and LNRS…QNPS. Positions 412–432 are enriched in basic and acidic residues; the sequence is ASDKEKLNRSNFEKQKVEPPK. Residues 440–461 are compositionally biased toward polar residues; that stretch reads SRLNASPTAKKTPHRSFTNNSK. 2 stretches are compositionally biased toward basic and acidic residues: residues 464 to 478 and 543 to 561; these read GRSD…EALR and KETT…RAAK. Residues 653-830 enclose the tr-type G domain; it reads KRPPVITVMG…EVEDLQANPE (178 aa). The segment at 662–669 is G1; that stretch reads GHVDHGKT. 662-669 is a binding site for GTP; sequence GHVDHGKT. Positions 687 to 691 are G2; it reads GITQH. Residues 712–715 form a G3 region; it reads DTPG. Residues 712 to 716 and 766 to 769 each bind GTP; these read DTPGH and NKID. A G4 region spans residues 766-769; the sequence is NKID. Residues 802 to 804 form a G5 region; the sequence is SAI.

This sequence belongs to the TRAFAC class translation factor GTPase superfamily. Classic translation factor GTPase family. IF-2 subfamily.

Its subcellular location is the cytoplasm. In terms of biological role, one of the essential components for the initiation of protein synthesis. Protects formylmethionyl-tRNA from spontaneous hydrolysis and promotes its binding to the 30S ribosomal subunits. Also involved in the hydrolysis of GTP during the formation of the 70S ribosomal complex. This is Translation initiation factor IF-2 from Prochlorococcus marinus (strain MIT 9515).